Reading from the N-terminus, the 392-residue chain is Multidrug resistance protein MdtL (392 aa).

12 consecutive transmembrane segments (helical) span residues 4–24, 38–58, 69–89, 95–115, 131–151, 158–178, 209–229, 246–266, 270–290, 294–314, 331–351, and 357–377; these read FLLCSFALVLLYPSGIDMYLV, AQLHIAFSVYLAGMASAMLFA, PVAIVGAAIFVIASLICAQVH, LIGRFIQGIAAGSCYVVAFAI, LLNGITCIIPVLAPVLGHLIM, SLFYTMTGMGVMVAVLSVFIL, LLITTLSVTVILTYVNVSPVL, ALMAMISMAVSFSTPFVLSLF, TLMLTSQVLFLAAGVTLSLAT, VTLIGLGMICAGFSVGFGVAM, VLGIAQVCGSSLWIWLAAIIG, and MLIGILIACSIVSLVLLLVVT.

This sequence belongs to the major facilitator superfamily. DHA1 family. MdtL (TC 2.A.1.2.22) subfamily.

It localises to the cell inner membrane. This is Multidrug resistance protein MdtL from Klebsiella pneumoniae subsp. pneumoniae (strain ATCC 700721 / MGH 78578).